A 272-amino-acid polypeptide reads, in one-letter code: Alpha-tubulin N-acetyltransferase (272 aa).

The region spanning 1–186 (MEFRFNCHPL…NNFVVYEGFF (186 aa)) is the N-acetyltransferase domain. Acetyl-CoA-binding positions include 120-133 (FYVH…GLGR) and 156-165 (SEKLLGFLQK). Positions 216–244 (TTVGEQRRSSSQTRQQVVSPPVVQQPPVG) are disordered. Residues 224-244 (SSSQTRQQVVSPPVVQQPPVG) show a composition bias toward low complexity.

It belongs to the acetyltransferase ATAT1 family.

The enzyme catalyses L-lysyl-[alpha-tubulin] + acetyl-CoA = N(6)-acetyl-L-lysyl-[alpha-tubulin] + CoA + H(+). In terms of biological role, specifically acetylates 'Lys-40' in alpha-tubulin on the lumenal side of microtubules. Promotes microtubule destabilization and accelerates microtubule dynamics; this activity may be independent of acetylation activity. Acetylates alpha-tubulin with a slow enzymatic rate, due to a catalytic site that is not optimized for acetyl transfer. Enters the microtubule through each end and diffuses quickly throughout the lumen of microtubules. Acetylates only long/old microtubules because of its slow acetylation rate since it does not have time to act on dynamically unstable microtubules before the enzyme is released. This is Alpha-tubulin N-acetyltransferase from Aedes aegypti (Yellowfever mosquito).